Consider the following 181-residue polypeptide: Alkyl hydroperoxide reductase AhpD (181 aa).

The active-site Proton donor is the Cys-131. Cys-131 and Cys-134 form a disulfide bridge. Cys-134 acts as the Cysteine sulfenic acid (-SOH) intermediate in catalysis.

It belongs to the AhpD family.

The catalysed reaction is N(6)-[(R)-dihydrolipoyl]-L-lysyl-[lipoyl-carrier protein] + a hydroperoxide = N(6)-[(R)-lipoyl]-L-lysyl-[lipoyl-carrier protein] + an alcohol + H2O. Antioxidant protein with alkyl hydroperoxidase activity. Required for the reduction of the AhpC active site cysteine residues and for the regeneration of the AhpC enzyme activity. The protein is Alkyl hydroperoxide reductase AhpD of Azorhizobium caulinodans (strain ATCC 43989 / DSM 5975 / JCM 20966 / LMG 6465 / NBRC 14845 / NCIMB 13405 / ORS 571).